Reading from the N-terminus, the 92-residue chain is MSPVLRLEILKLDDKYLELKAKGETYTLFSPLVEYLSNDPDVEYVQFDVDHPLQENAYFKLKVKRGNPLEAIQRAVNAILSDLEELERGFFS.

It belongs to the archaeal Rpo11/eukaryotic RPB11/RPC19 RNA polymerase subunit family. In terms of assembly, part of the RNA polymerase complex.

The protein resides in the cytoplasm. It carries out the reaction RNA(n) + a ribonucleoside 5'-triphosphate = RNA(n+1) + diphosphate. Its function is as follows. DNA-dependent RNA polymerase (RNAP) catalyzes the transcription of DNA into RNA using the four ribonucleoside triphosphates as substrates. The polypeptide is DNA-directed RNA polymerase subunit Rpo11 (Pyrobaculum aerophilum (strain ATCC 51768 / DSM 7523 / JCM 9630 / CIP 104966 / NBRC 100827 / IM2)).